Here is a 136-residue protein sequence, read N- to C-terminus: Small ribosomal subunit protein uS9 (136 aa).

The disordered stretch occupies residues 97–136 (SPDNRKPLKTEGHLSRDPRAKERRKYGLKKARKAPQFSKR). The segment covering 98–116 (PDNRKPLKTEGHLSRDPRA) has biased composition (basic and acidic residues). Over residues 117–136 (KERRKYGLKKARKAPQFSKR) the composition is skewed to basic residues.

This sequence belongs to the universal ribosomal protein uS9 family.

The chain is Small ribosomal subunit protein uS9 from Prochlorococcus marinus (strain AS9601).